Here is a 261-residue protein sequence, read N- to C-terminus: MICOS complex subunit Mic25 (261 aa).

A lipid anchor (N-myristoyl glycine) is attached at Gly2. A phosphoserine mark is found at Ser13, Ser31, and Ser33. Disordered regions lie at residues 39-59 (KDCSQPSAGEQLAPGPGPECS), 81-114 (CGPAEGTYKAPQGDFKVSRAENSDGQQSSAVKED), and 140-165 (TEKHLKASLPKKKATHEQQQSDRLTR). Positions 109–202 (SAVKEDLKKF…AELYKLSSQQ (94 aa)) form a coiled coil. Over residues 154–165 (THEQQQSDRLTR) the composition is skewed to basic and acidic residues. A CHCH domain is found at 220-261 (EPVCSGLQAQILRCYRDHLHEVLLCSDLAKAYQHCVSTARKG). 2 consecutive short sequence motifs (cx9C motif) follow at residues 223-233 (CSGLQAQILRC) and 244-254 (CSDLAKAYQHC). Disulfide bonds link Cys223/Cys254 and Cys233/Cys244.

This sequence belongs to the MICOS complex subunit Mic19 family. Metazoan Mic25 subfamily. In terms of assembly, component of the mitochondrial contact site and cristae organizing system (MICOS) complex, composed of at least MICOS10/MIC10, CHCHD3/MIC19, CHCHD6/MIC25, APOOL/MIC27, IMMT/MIC60, APOO/MIC23/MIC26 and MICOS13/MIC13. This complex was also known under the names MINOS or MitOS complex. The MICOS complex associates with mitochondrial outer membrane proteins SAMM50, MTX1 and MTX2 (together described as components of the mitochondrial outer membrane sorting assembly machinery (SAM) complex) and DNAJC11, mitochondrial inner membrane protein TMEM11 and with HSPA9. The MICOS and SAM complexes together with DNAJC11 are part of a large protein complex spanning both membranes termed the mitochondrial intermembrane space bridging (MIB) complex. Interacts with DISC1. Interacts with IMMT/MIC60.

It localises to the mitochondrion inner membrane. The protein resides in the mitochondrion. Functionally, component of the MICOS complex, a large protein complex of the mitochondrial inner membrane that plays crucial roles in the maintenance of crista junctions, inner membrane architecture, and formation of contact sites to the outer membrane. This is MICOS complex subunit Mic25 (Chchd6) from Rattus norvegicus (Rat).